Here is a 367-residue protein sequence, read N- to C-terminus: Voltage-gated potassium channel subunit beta-2 (367 aa).

3 positions are modified to phosphoserine: S9, S14, and S20. R28 bears the Asymmetric dimethylarginine; alternate mark. An Omega-N-methylarginine; alternate modification is found at R28. Residue S31 is modified to Phosphoserine. Positions 56, 57, 63, and 85 each coordinate NADP(+). The active-site Proton donor/acceptor is Y90. A Phosphoserine modification is found at S112. K124 carries the post-translational modification N6-acetyllysine. The NADP(+) site is built by N158, S188, R189, Q214, W243, S244, P245, L246, A247, C248, K254, Y262, R264, G323, S325, Q329, E332, and N333.

This sequence belongs to the shaker potassium channel beta subunit family. Homotetramer. Interaction with tetrameric potassium channel alpha subunits gives rise to a heterooctamer. Identified in potassium channel complexes containing KCNA1, KCNA2, KCNA4, KCNA5, KCNA6, KCNAB1, KCNAB2 and KCND3. Interacts (in unphosphorylated form) with MAPRE1. Forms a ternary complex with SQSTM1 and PRKCZ. Post-translationally, phosphorylated by PRKCZ; may be regulated by incorporation in a complex composed of PRKCZ and SQSTM1. Detected in brain. Detected at basket cell terminals in cerebellum and in the juxtaparanodal region of nodes of Ranvier (at protein level). Strongest expression in brain and eye. Highest levels in brain detected in brainstem and diencephalon. Strong expression also detected in lung and heart. Moderate expression in kidney, T-lymphocytes and skeletal muscle.

It is found in the cytoplasm. It localises to the membrane. The protein resides in the cell membrane. Its subcellular location is the cell projection. The protein localises to the axon. It is found in the synapse. It localises to the synaptosome. The protein resides in the cytoskeleton. It carries out the reaction hydroxyacetone + NADP(+) = methylglyoxal + NADPH + H(+). The catalysed reaction is (E)-4-oxonon-2-en-1-ol + NADP(+) = (E)-4-oxonon-2-enal + NADPH + H(+). In terms of biological role, regulatory subunit of the voltage-gated potassium (Kv) Shaker channel family. Shaker channels are composed of pore-forming and potassium-conducting alpha subunits and of regulatory beta subunits. The beta-2/KCNAB2 subunit promotes potassium channel closure via a mechanism that does not involve physical obstruction of the channel pore. Promotes the inactivation of Kv1.4/KCNA4 and Kv1.5/KCNA5 alpha subunit-containing channels. Displays nicotinamide adenine dinucleotide phosphate (NADPH)-dependent aldoketoreductase activity by catalyzing the NADPH-dependent reduction of a wide range of aldehyde and ketone substrates. Substrate specificity includes methylglyoxal, 9,10-phenanthrenequinone, prostaglandin J2, 4-nitrobenzaldehyde, 4-nitroacetophenone and 4-oxo-trans-2-nonenal (in vitro, no physiological substrate identified yet). The binding of oxidized and reduced nucleotide cofactors alters Kv channel gating and may contribute to dynamic fine tuning of cell excitability. Contributes to the regulation of nerve signaling, and prevents neuronal hyperexcitability. This chain is Voltage-gated potassium channel subunit beta-2, found in Mus musculus (Mouse).